We begin with the raw amino-acid sequence, 162 residues long: Cadmium metallothionein (162 aa).

A propeptide spanning residues 1–2 is cleaved from the precursor; sequence MD.

Functionally, the metallothioneins are involved in the cellular sequestration of toxic metal ions. The chain is Cadmium metallothionein (MTT1) from Tetrahymena thermophila.